A 113-amino-acid chain; its full sequence is MHEMALCESMIEIIEREAREQQFSRVRAVWLEIGALGHVDPEAMRFCFSAVAHGGIAADARLEILEMPGAAWCMDCAKTVTIAQRDAPCPDCGGHHLQITAGEELRIRELEVD.

Position 2 (His2) interacts with Ni(2+). Residues Cys73, Cys76, Cys89, and Cys92 each contribute to the Zn(2+) site.

It belongs to the HypA/HybF family.

In terms of biological role, involved in the maturation of [NiFe] hydrogenases. Required for nickel insertion into the metal center of the hydrogenase. This is Hydrogenase maturation factor HypA from Rhodopseudomonas palustris (strain TIE-1).